A 309-amino-acid polypeptide reads, in one-letter code: HPr kinase/phosphorylase (309 aa).

Catalysis depends on residues H138 and K159. 153 to 160 (GQSGVGKS) is a binding site for ATP. S160 contacts Mg(2+). D177 serves as the catalytic Proton acceptor; for phosphorylation activity. Proton donor; for dephosphorylation activity. The tract at residues 201 to 210 (LEIRGLGIIN) is important for the catalytic mechanism of both phosphorylation and dephosphorylation. Mg(2+) is bound at residue E202. R243 is a catalytic residue. An important for the catalytic mechanism of dephosphorylation region spans residues 264-269 (PVRPGR).

This sequence belongs to the HPrK/P family. In terms of assembly, homohexamer. Mg(2+) is required as a cofactor.

The enzyme catalyses [HPr protein]-L-serine + ATP = [HPr protein]-O-phospho-L-serine + ADP + H(+). It carries out the reaction [HPr protein]-O-phospho-L-serine + phosphate + H(+) = [HPr protein]-L-serine + diphosphate. Catalyzes the ATP- as well as the pyrophosphate-dependent phosphorylation of a specific serine residue in HPr, a phosphocarrier protein of the phosphoenolpyruvate-dependent sugar phosphotransferase system (PTS). HprK/P also catalyzes the pyrophosphate-producing, inorganic phosphate-dependent dephosphorylation (phosphorolysis) of seryl-phosphorylated HPr (P-Ser-HPr). The two antagonistic activities of HprK/P are regulated by several intracellular metabolites, which change their concentration in response to the absence or presence of rapidly metabolisable carbon sources (glucose, fructose, etc.) in the growth medium. Also phosphorylates/dephosphorylates the HPr-like catabolite repression protein crh on a specific serine residue. Therefore, by controlling the phosphorylation state of HPr and crh, HPrK/P is a sensor enzyme that plays a major role in the regulation of carbon metabolism and sugar transport: it mediates carbon catabolite repression (CCR), and regulates PTS-catalyzed carbohydrate uptake and inducer exclusion. This is HPr kinase/phosphorylase from Bacillus mycoides (strain KBAB4) (Bacillus weihenstephanensis).